The chain runs to 88 residues: Small ribosomal subunit protein uS15 (88 aa).

The protein belongs to the universal ribosomal protein uS15 family. As to quaternary structure, part of the 30S ribosomal subunit. Forms a bridge to the 50S subunit in the 70S ribosome, contacting the 23S rRNA.

In terms of biological role, one of the primary rRNA binding proteins, it binds directly to 16S rRNA where it helps nucleate assembly of the platform of the 30S subunit by binding and bridging several RNA helices of the 16S rRNA. Functionally, forms an intersubunit bridge (bridge B4) with the 23S rRNA of the 50S subunit in the ribosome. The protein is Small ribosomal subunit protein uS15 of Mesoplasma florum (strain ATCC 33453 / NBRC 100688 / NCTC 11704 / L1) (Acholeplasma florum).